We begin with the raw amino-acid sequence, 418 residues long: Actin-like protein C08B11.6 (418 aa).

The protein belongs to the actin family. ARP6 subfamily.

Its subcellular location is the cytoplasm. The protein localises to the cytoskeleton. This is Actin-like protein C08B11.6 (arp-6) from Caenorhabditis elegans.